We begin with the raw amino-acid sequence, 493 residues long: Glycerol kinase (493 aa).

T13 lines the ADP pocket. T13, T14, and S15 together coordinate ATP. T13 contacts sn-glycerol 3-phosphate. R17 lines the ADP pocket. Sn-glycerol 3-phosphate is bound by residues R83, E84, Y135, and D244. Positions 83, 84, 135, 244, and 245 each coordinate glycerol. 2 residues coordinate ADP: T266 and G309. 4 residues coordinate ATP: T266, G309, Q313, and G410. Positions 410 and 414 each coordinate ADP.

The protein belongs to the FGGY kinase family.

It catalyses the reaction glycerol + ATP = sn-glycerol 3-phosphate + ADP + H(+). It functions in the pathway polyol metabolism; glycerol degradation via glycerol kinase pathway; sn-glycerol 3-phosphate from glycerol: step 1/1. With respect to regulation, inhibited by fructose 1,6-bisphosphate (FBP). Key enzyme in the regulation of glycerol uptake and metabolism. Catalyzes the phosphorylation of glycerol to yield sn-glycerol 3-phosphate. The protein is Glycerol kinase of Shewanella piezotolerans (strain WP3 / JCM 13877).